The primary structure comprises 299 residues: Acetylglutamate kinase (299 aa).

Substrate contacts are provided by residues 66–67, R88, and N196; that span reads GG.

It belongs to the acetylglutamate kinase family. ArgB subfamily.

Its subcellular location is the cytoplasm. The enzyme catalyses N-acetyl-L-glutamate + ATP = N-acetyl-L-glutamyl 5-phosphate + ADP. Its pathway is amino-acid biosynthesis; L-arginine biosynthesis; N(2)-acetyl-L-ornithine from L-glutamate: step 2/4. Functionally, catalyzes the ATP-dependent phosphorylation of N-acetyl-L-glutamate. The protein is Acetylglutamate kinase of Alcanivorax borkumensis (strain ATCC 700651 / DSM 11573 / NCIMB 13689 / SK2).